The chain runs to 540 residues: Serine/threonine-protein phosphatase ppzA (540 aa).

2 disordered regions span residues 1–108 and 120–140; these read MGQS…KRGH and VDHVSDVPPTGAAPTGPSTQK. 2 stretches are compositionally biased toward polar residues: residues 15–24 and 45–54; these read SLQSYPSFSR and SDSPRGSTAG. Residues 62-88 show a composition bias toward low complexity; that stretch reads AASVKSTTSRRSSTNQSVQSPDDTPSQ. The segment covering 89–98 has biased composition (pro residues); the sequence is PDAPEPPPSP. Low complexity predominate over residues 127–136; it reads PPTGAAPTGP. Mn(2+)-binding residues include Asp239, His241, Asp267, and Asn299. The 283-residue stretch at 258–540 folds into the Phosphatase tensin-type domain; that stretch reads PASNYLFLGD…SLVTSWGISR (283 aa). The active-site Proton donor is His300. 2 residues coordinate Mn(2+): His348 and His423.

This sequence belongs to the PPP phosphatase family. PP-Z subfamily. In terms of assembly, interacts with at least 54 proteins, of which 31 are detected only after iron starvation and 22 are detected only in control conditions. Only the regulatory subunit of the protein phosphatase PP1 (Afu1g04800/AFUB_005140) interacts with ppzA in both conditions. Mn(2+) is required as a cofactor.

The protein localises to the cytoplasm. It carries out the reaction O-phospho-L-seryl-[protein] + H2O = L-seryl-[protein] + phosphate. The catalysed reaction is O-phospho-L-threonyl-[protein] + H2O = L-threonyl-[protein] + phosphate. Functionally, catalytic subunit of protein phosphatase Z (PPZ) involved in iron assimilation. Regulates secondary metabolites production, including gliotoxin, pyripyropene A, fumagillin, fumiquinazoline A, triacetyl-fusarinine C, and helvolic acid. Plays a key role in pathogenicity. In Aspergillus fumigatus (strain CBS 144.89 / FGSC A1163 / CEA10) (Neosartorya fumigata), this protein is Serine/threonine-protein phosphatase ppzA.